Reading from the N-terminus, the 729-residue chain is Phosphoribosylformylglycinamidine synthase subunit PurL (729 aa).

The active site involves histidine 54. The ATP site is built by tyrosine 57 and lysine 96. Glutamate 98 lines the Mg(2+) pocket. Residues 99-102 (SHNH) and arginine 121 each bind substrate. The active-site Proton acceptor is histidine 100. Residue aspartate 122 participates in Mg(2+) binding. Substrate is bound at residue glutamine 245. Residue aspartate 273 coordinates Mg(2+). 317–319 (ETQ) is a substrate binding site. Residues aspartate 495 and glycine 532 each coordinate ATP. Asparagine 533 provides a ligand contact to Mg(2+). Serine 535 is a binding site for substrate.

It belongs to the FGAMS family. As to quaternary structure, monomer. Part of the FGAM synthase complex composed of 1 PurL, 1 PurQ and 2 PurS subunits.

The protein resides in the cytoplasm. The catalysed reaction is N(2)-formyl-N(1)-(5-phospho-beta-D-ribosyl)glycinamide + L-glutamine + ATP + H2O = 2-formamido-N(1)-(5-O-phospho-beta-D-ribosyl)acetamidine + L-glutamate + ADP + phosphate + H(+). Its pathway is purine metabolism; IMP biosynthesis via de novo pathway; 5-amino-1-(5-phospho-D-ribosyl)imidazole from N(2)-formyl-N(1)-(5-phospho-D-ribosyl)glycinamide: step 1/2. Part of the phosphoribosylformylglycinamidine synthase complex involved in the purines biosynthetic pathway. Catalyzes the ATP-dependent conversion of formylglycinamide ribonucleotide (FGAR) and glutamine to yield formylglycinamidine ribonucleotide (FGAM) and glutamate. The FGAM synthase complex is composed of three subunits. PurQ produces an ammonia molecule by converting glutamine to glutamate. PurL transfers the ammonia molecule to FGAR to form FGAM in an ATP-dependent manner. PurS interacts with PurQ and PurL and is thought to assist in the transfer of the ammonia molecule from PurQ to PurL. The polypeptide is Phosphoribosylformylglycinamidine synthase subunit PurL (Staphylococcus aureus (strain bovine RF122 / ET3-1)).